The primary structure comprises 632 residues: tRNA uridine 5-carboxymethylaminomethyl modification enzyme MnmG (632 aa).

13 to 18 (GGGHAG) lines the FAD pocket. 273-287 (GPRYCPSIEDKIHRF) is a binding site for NAD(+).

Belongs to the MnmG family. As to quaternary structure, homodimer. Heterotetramer of two MnmE and two MnmG subunits. FAD serves as cofactor.

Its subcellular location is the cytoplasm. In terms of biological role, NAD-binding protein involved in the addition of a carboxymethylaminomethyl (cmnm) group at the wobble position (U34) of certain tRNAs, forming tRNA-cmnm(5)s(2)U34. The sequence is that of tRNA uridine 5-carboxymethylaminomethyl modification enzyme MnmG from Psychrobacter arcticus (strain DSM 17307 / VKM B-2377 / 273-4).